Consider the following 203-residue polypeptide: TATA-binding protein 2 (203 aa).

Tandem repeats lie at residues 28–104 (LQNI…ARII) and 118–195 (IQNI…YPVL).

This sequence belongs to the TBP family. As to quaternary structure, belongs to the TFIID complex together with the TBP-associated factors (TAFs). Binds DNA as monomer. Interacts with RF2A and TFIIB. Interacts with CWZF7.

The protein localises to the nucleus. In terms of biological role, general transcription factor that functions at the core of the DNA-binding multiprotein factor TFIID. Binding of TFIID to the TATA box is the initial transcriptional step of the pre-initiation complex (PIC), playing a role in the activation of eukaryotic genes transcribed by RNA polymerase II. The protein is TATA-binding protein 2 (TBP2) of Oryza sativa subsp. japonica (Rice).